Here is a 428-residue protein sequence, read N- to C-terminus: GTPase Obg (428 aa).

In terms of domain architecture, Obg spans 1-158 (MFVDQVKIYV…RDVILELKVL (158 aa)). Residues 159-329 (ADVGLVGFPS…LLFEVANLIE (171 aa)) form the OBG-type G domain. GTP contacts are provided by residues 165-172 (GFPSVGKS), 190-194 (FTTIV), 212-215 (DLPG), 282-285 (NKMD), and 310-312 (SAV). The Mg(2+) site is built by Ser-172 and Thr-192. One can recognise an OCT domain in the interval 350–428 (KFDTEGVKFE…ILEYEFEFID (79 aa)).

It belongs to the TRAFAC class OBG-HflX-like GTPase superfamily. OBG GTPase family. In terms of assembly, monomer. The cofactor is Mg(2+).

The protein resides in the cytoplasm. Functionally, an essential GTPase which binds GTP, GDP and possibly (p)ppGpp with moderate affinity, with high nucleotide exchange rates and a fairly low GTP hydrolysis rate. Plays a role in control of the cell cycle, stress response, ribosome biogenesis and in those bacteria that undergo differentiation, in morphogenesis control. In Bacillus cereus (strain ATCC 14579 / DSM 31 / CCUG 7414 / JCM 2152 / NBRC 15305 / NCIMB 9373 / NCTC 2599 / NRRL B-3711), this protein is GTPase Obg.